A 173-amino-acid polypeptide reads, in one-letter code: Pectinesterase inhibitor 2 (173 aa).

Residues 1 to 25 (MAAYLTNRVLMSSLMFFVMTGSLNA) form the signal peptide. Cysteine 34 and cysteine 43 are disulfide-bonded. N-linked (GlcNAc...) asparagine glycans are attached at residues asparagine 39 and asparagine 63. A disulfide bond links cysteine 99 and cysteine 139.

The protein belongs to the PMEI family. As to quaternary structure, interacts with PPME1. In terms of tissue distribution, highest expression in flowers. Expressed exclusively at the pollen tube tip.

It localises to the secreted. The protein localises to the extracellular space. It is found in the apoplast. Inhibits pectin methylesterase (PME) from flowers, siliques and pollen tube. The sequence is that of Pectinesterase inhibitor 2 from Arabidopsis thaliana (Mouse-ear cress).